The primary structure comprises 121 residues: Large ribosomal subunit protein uL18 (121 aa).

Residues 63–88 (AAIRPDPSPKKSQKQPPKTHKRYNLK) form a disordered region. Over residues 73–87 (KSQKQPPKTHKRYNL) the composition is skewed to basic residues.

The protein belongs to the universal ribosomal protein uL18 family. As to quaternary structure, component of the large ribosomal subunit (LSU).

It localises to the cytoplasm. The protein localises to the nucleus. Functionally, component of the ribosome, a large ribonucleoprotein complex responsible for the synthesis of proteins in the cell. The small ribosomal subunit (SSU) binds messenger RNAs (mRNAs) and translates the encoded message by selecting cognate aminoacyl-transfer RNA (tRNA) molecules. The large subunit (LSU) contains the ribosomal catalytic site termed the peptidyl transferase center (PTC), which catalyzes the formation of peptide bonds, thereby polymerizing the amino acids delivered by tRNAs into a polypeptide chain. The nascent polypeptides leave the ribosome through a tunnel in the LSU and interact with protein factors that function in enzymatic processing, targeting, and the membrane insertion of nascent chains at the exit of the ribosomal tunnel. This chain is Large ribosomal subunit protein uL18 (RPL5), found in Solanum melongena (Eggplant).